We begin with the raw amino-acid sequence, 404 residues long: Nicotinate phosphoribosyltransferase (404 aa).

The residue at position 225 (His225) is a Phosphohistidine; by autocatalysis.

Belongs to the NAPRTase family. Post-translationally, transiently phosphorylated on a His residue during the reaction cycle. Phosphorylation strongly increases the affinity for substrates and increases the rate of nicotinate D-ribonucleotide production. Dephosphorylation regenerates the low-affinity form of the enzyme, leading to product release.

It carries out the reaction nicotinate + 5-phospho-alpha-D-ribose 1-diphosphate + ATP + H2O = nicotinate beta-D-ribonucleotide + ADP + phosphate + diphosphate. It functions in the pathway cofactor biosynthesis; NAD(+) biosynthesis; nicotinate D-ribonucleotide from nicotinate: step 1/1. Catalyzes the synthesis of beta-nicotinate D-ribonucleotide from nicotinate and 5-phospho-D-ribose 1-phosphate at the expense of ATP. This is Nicotinate phosphoribosyltransferase from Methanosarcina acetivorans (strain ATCC 35395 / DSM 2834 / JCM 12185 / C2A).